The chain runs to 118 residues: MNKRELGNSGEEKAVEFLKKMGYEILHRNFRCKLGEVDIIAKEGNTIVFVEVKTRRSLKFGYPSEAITMTKQRHLKRVAEYFVQRQKAKNCMYRFDVVEVYMNVKNEVLDINLIKNAF.

It belongs to the UPF0102 family.

The chain is UPF0102 protein Csac_2148 from Caldicellulosiruptor saccharolyticus (strain ATCC 43494 / DSM 8903 / Tp8T 6331).